We begin with the raw amino-acid sequence, 1620 residues long: Putative zinc carboxypeptidase (1620 aa).

Residues 1–1367 lie on the Extracellular side of the membrane; sequence MLFKNEDSGN…SYDFLYFDEN (1367 aa). Residue Asn19 is glycosylated (N-linked (GlcNAc...) asparagine). The tract at residues 32–74 is disordered; it reads RNDNKNNDNEDNKQDDEEKNDEDDNKSNLLLEENEENKRQGDK. A compositionally biased stretch (basic and acidic residues) spans 33–43; the sequence is NDNKNNDNEDN. Positions 44 to 55 are enriched in acidic residues; the sequence is KQDDEEKNDEDD. N-linked (GlcNAc...) asparagine glycosylation is found at Asn56 and Asn102. Residues 309–328 form a disordered region; it reads GNHYDAHESTNTYDEEKTRE. Asn354, Asn487, Asn508, Asn529, Asn550, Asn571, Asn589, Asn687, Asn802, and Asn1010 each carry an N-linked (GlcNAc...) asparagine glycan. Residues 497–559 form a possible malaria epitope region; that stretch reads VNNLDSTVNY…NSTGNNINNI (63 aa). Positions 1004-1261 constitute a Peptidase M14 domain; sequence GENKKNNGTK…FYVQNYFEGY (258 aa). Zn(2+) contacts are provided by His1059 and Glu1062. Asn1064 and Asn1141 each carry an N-linked (GlcNAc...) asparagine glycan. Zn(2+) is bound at residue His1155. Glu1229 acts as the Proton donor/acceptor in catalysis. Residues 1279-1329 form a disordered region; sequence NIKGDDNINGDDNIKGGDNIKGDDNIKRDDNFQRDDNFQRDDNFQRGDNFH. The helical transmembrane segment at 1368–1388 threads the bilayer; sequence LLFMTGVSFGICLFKFINFLS. Residues 1389–1620 are Cytoplasmic-facing; the sequence is YHKSSICRRT…SKRKKVIVIL (232 aa). The segment at 1560–1620 is disordered; that stretch reads PNGKYKGPGF…SKRKKVIVIL (61 aa). The segment covering 1581–1597 has biased composition (basic and acidic residues); sequence NKNESKTEKKSKTENKS. A compositionally biased stretch (basic residues) spans 1598–1620; the sequence is KSKSKNKSKSKNKSKRKKVIVIL.

This sequence belongs to the peptidase M14 family. Zn(2+) is required as a cofactor.

The protein localises to the membrane. In Plasmodium falciparum (isolate 3D7), this protein is Putative zinc carboxypeptidase.